A 350-amino-acid chain; its full sequence is Paired box protein Pax-4 (350 aa).

Positions G5–L131 form a DNA-binding region, paired. Residues S8–T64 are PAI subdomain. The RED subdomain stretch occupies residues P83–L131. Residues L153 to R172 are disordered. The homeobox DNA-binding region spans G170–E229. The segment at C278–P350 is transcription repression.

This sequence belongs to the paired homeobox family.

The protein resides in the nucleus. Plays an important role in the differentiation and development of pancreatic islet beta cells. Transcriptional repressor that binds to a common element in the glucagon, insulin and somatostatin promoters. Competes with PAX6 for this same promoter binding site. Isoform 2 appears to be a dominant negative form antagonizing PAX4 transcriptional activity. This is Paired box protein Pax-4 (PAX4) from Homo sapiens (Human).